A 465-amino-acid polypeptide reads, in one-letter code: NADH-quinone oxidoreductase subunit N (465 aa).

13 helical membrane-spanning segments follow: residues 9 to 29 (FNFVLLFPVLSLLFWAIVLLL), 44 to 64 (ASIIALFSTLCFLLIYNGFVL), 73 to 93 (LFVSDNYAIFAQIVILVFSML), 110 to 130 (FLFMIASLILMISSTNLIVIF), 159 to 179 (YFTLAAVGAGFFVFACAFVYL), 198 to 218 (PILLCAGVMFLVIVGVKLSIA), 235 to 255 (FIAFISIVPKIAMIIVVLRIF), 265 to 285 (EYIVALLAIFSMLAVSIVALI), 292 to 312 (MLAYSSITHSSFILAVIVSSM), 327 to 347 (IFALFVYWISFAFANYGIFLI), 371 to 391 (IMLAIFILCIAGIPPFGIFWG), 405 to 427 (YALVFAVALSSMIMLYAYLKILI), and 444 to 464 (VKQKIILCLCLIGSVSCVFLL).

The protein belongs to the complex I subunit 2 family. As to quaternary structure, NDH-1 is composed of 14 different subunits. Subunits NuoA, H, J, K, L, M, N constitute the membrane sector of the complex.

The protein resides in the cell inner membrane. The catalysed reaction is a quinone + NADH + 5 H(+)(in) = a quinol + NAD(+) + 4 H(+)(out). Functionally, NDH-1 shuttles electrons from NADH, via FMN and iron-sulfur (Fe-S) centers, to quinones in the respiratory chain. The immediate electron acceptor for the enzyme in this species is believed to be ubiquinone. Couples the redox reaction to proton translocation (for every two electrons transferred, four hydrogen ions are translocated across the cytoplasmic membrane), and thus conserves the redox energy in a proton gradient. This Campylobacter lari (strain RM2100 / D67 / ATCC BAA-1060) protein is NADH-quinone oxidoreductase subunit N.